Reading from the N-terminus, the 564-residue chain is Multidrug resistance protein 1 (564 aa).

At M1–K115 the chain is on the cytoplasmic side. The tract at residues I60–D101 is disordered. The segment covering N67–D86 has biased composition (low complexity). The helical transmembrane segment at A116–Y136 threads the bilayer. Residues T137–R151 are Extracellular-facing. The chain crosses the membrane as a helical span at residues V152–F172. Topologically, residues S173 to R183 are cytoplasmic. The chain crosses the membrane as a helical span at residues T184–V204. At N205–N206 the chain is on the extracellular side. Residues I207 to T227 traverse the membrane as a helical segment. At G228 to P242 the chain is on the cytoplasmic side. Residues V243–G263 traverse the membrane as a helical segment. Over S264–R273 the chain is Extracellular. Residues W274–L294 form a helical membrane-spanning segment. Residues P295 to E350 lie on the Cytoplasmic side of the membrane. The chain crosses the membrane as a helical span at residues P351 to F371. The Extracellular segment spans residues E372 to G390. Residues T391 to I411 form a helical membrane-spanning segment. Residues R412–E428 are Cytoplasmic-facing. A helical membrane pass occupies residues V429–G449. Residues W450 to T455 lie on the Extracellular side of the membrane. The N-linked (GlcNAc...) asparagine glycan is linked to N453. The chain crosses the membrane as a helical span at residues T456–F476. Residues Q477 to R503 lie on the Cytoplasmic side of the membrane. The helical transmembrane segment at S504–P524 threads the bilayer. Topologically, residues E525–V528 are extracellular. The chain crosses the membrane as a helical span at residues A529–F549. At Y550–N564 the chain is on the cytoplasmic side.

The protein belongs to the major facilitator superfamily. CAR1 family.

It is found in the cell membrane. In terms of biological role, plasma membrane multidrug efflux pump that confers resistance to numerous chemicals including azoles such as fluconazole, voriconazole, and benztriazoles, as well as to benomyl, cycloheximide, methotrexate, 4-nitroquinoline-N-oxide, sulfometuron methyl, cerulenin, and brefeldin A. This Candida albicans (strain SC5314 / ATCC MYA-2876) (Yeast) protein is Multidrug resistance protein 1.